A 622-amino-acid chain; its full sequence is Leucine-rich repeat-containing protein 70 (622 aa).

The signal sequence occupies residues 1 to 31; sequence MCGLQFSLPCLRLFLVVTCYLLLLLHKEILG. Positions 32 to 60 constitute an LRRNT domain; the sequence is CSSVCQLCTGRQINCRNLGLSSIPKNFPE. LRR repeat units lie at residues 61-82, 85-106, 109-130, 133-154, 157-178, 181-202, 205-226, 229-250, 253-274, 277-298, 301-322, and 326-347; these read STVF…ELTG, SLVA…AFVQ, HLYF…IFKG, NLRN…VFND, SVQY…TFVG, ALRI…GFQH, NLAC…AFEV, SLRR…AFKG, NLEY…GFSG, NLKH…TFSL, NLIY…TFEN, and SLKI…VLKP. Asparagine 215 carries N-linked (GlcNAc...) asparagine glycosylation. Asparagine 266 is a glycosylation site (N-linked (GlcNAc...) asparagine). 2 N-linked (GlcNAc...) asparagine glycosylation sites follow: asparagine 331 and asparagine 400. An LRRCT domain is found at 359–406; the sequence is NPWECNCKLLGLRDWLASSAITLNIYCQNPPSMRGRALRYINITNCVT. Residues 527–547 form a helical membrane-spanning segment; the sequence is AFDILLAFFILACVLIIFLIY.

In terms of tissue distribution, expressed at low levels in many tissues, including smooth muscle, brain, uterus, pancreas, cartilage, adipose, spleen and testis.

The protein localises to the membrane. Renders cells highly sensitive to the activation by cytokines and lipopolysaccharide (LPS). This chain is Leucine-rich repeat-containing protein 70 (LRRC70), found in Homo sapiens (Human).